A 227-amino-acid polypeptide reads, in one-letter code: Putative methylase YubD (227 aa).

It belongs to the N(4)/N(6)-methyltransferase family.

In terms of biological role, a putative beta subtype methylase whose recognition site is unknown. The polypeptide is Putative methylase YubD (yubD) (Escherichia coli (strain K12)).